A 411-amino-acid chain; its full sequence is 2,3-bisphosphoglycerate-independent phosphoglycerate mutase (411 aa).

This sequence belongs to the BPG-independent phosphoglycerate mutase family. A-PGAM subfamily.

It catalyses the reaction (2R)-2-phosphoglycerate = (2R)-3-phosphoglycerate. It functions in the pathway carbohydrate degradation; glycolysis; pyruvate from D-glyceraldehyde 3-phosphate: step 3/5. Functionally, catalyzes the interconversion of 2-phosphoglycerate and 3-phosphoglycerate. In Pyrobaculum aerophilum (strain ATCC 51768 / DSM 7523 / JCM 9630 / CIP 104966 / NBRC 100827 / IM2), this protein is 2,3-bisphosphoglycerate-independent phosphoglycerate mutase.